Consider the following 234-residue polypeptide: Urease accessory protein UreF (234 aa).

This sequence belongs to the UreF family. In terms of assembly, ureD, UreF and UreG form a complex that acts as a GTP-hydrolysis-dependent molecular chaperone, activating the urease apoprotein by helping to assemble the nickel containing metallocenter of UreC. The UreE protein probably delivers the nickel.

The protein localises to the cytoplasm. Functionally, required for maturation of urease via the functional incorporation of the urease nickel metallocenter. The chain is Urease accessory protein UreF from Kocuria rhizophila (strain ATCC 9341 / DSM 348 / NBRC 103217 / DC2201).